Reading from the N-terminus, the 329-residue chain is DNA polymerase III subunit delta' (329 aa).

Component of the DNA clamp loading complex consisting of tau(3):delta(1):delta'(1). The DNA polymerase III holoenzyme complex contains at least 10 different subunits organized into 3 functionally essential subassemblies: the Pol III core, the beta sliding clamp processivity factor and the clamp-loading complex. The Pol III core (subunits alpha, epsilon and theta) contains the polymerase and the 3'-5' exonuclease proofreading activities. The polymerase is tethered to the template via the dimeric beta sliding clamp processivity factor. The DNA clamp-loading complex assembles the beta sliding clamp onto the primed template and plays a central role in the organization and communication at the replication fork.

The protein localises to the cytoplasm. Its subcellular location is the nucleoid. The enzyme catalyses DNA(n) + a 2'-deoxyribonucleoside 5'-triphosphate = DNA(n+1) + diphosphate. DNA polymerase III is a complex, multichain enzyme responsible for most of the replicative synthesis in bacteria. This is DNA polymerase III subunit delta' (holB) from Bacillus subtilis (strain 168).